Reading from the N-terminus, the 341-residue chain is tRNA N6-adenosine threonylcarbamoyltransferase (341 aa).

The Fe cation site is built by H110 and H114. Substrate-binding positions include 133–137, D166, G179, and N276; that span reads LVSGG. D304 lines the Fe cation pocket.

This sequence belongs to the KAE1 / TsaD family. Fe(2+) serves as cofactor.

It is found in the cytoplasm. The enzyme catalyses L-threonylcarbamoyladenylate + adenosine(37) in tRNA = N(6)-L-threonylcarbamoyladenosine(37) in tRNA + AMP + H(+). Its function is as follows. Required for the formation of a threonylcarbamoyl group on adenosine at position 37 (t(6)A37) in tRNAs that read codons beginning with adenine. Is involved in the transfer of the threonylcarbamoyl moiety of threonylcarbamoyl-AMP (TC-AMP) to the N6 group of A37, together with TsaE and TsaB. TsaD likely plays a direct catalytic role in this reaction. In Saccharophagus degradans (strain 2-40 / ATCC 43961 / DSM 17024), this protein is tRNA N6-adenosine threonylcarbamoyltransferase.